Reading from the N-terminus, the 263-residue chain is MQYGMDSFGLRGIPHQVFIKKKEGKIMSLAWWKRELFGGWTHFEAVWLLMFLGIQAVVFVFNPDSWLASVAAVTGILCVVFVGKGKISNYLFGLISVSLYAYVSYTFKLYGEMMLNLLVYVPVQFVGFAMWRKHMALGETAETEEVKAKALTVRQWLLVVAASVVGTSVYIEWLHHLGSALPTLDGVTVVVSIVAQVLMILRYREQWALWIVVNILTISLWAVAWFKNGETSLPLLLMYVMYLCNSVYGYINWTKLVKRHSGQ.

Topologically, residues 1 to 40 are cytoplasmic; sequence MQYGMDSFGLRGIPHQVFIKKKEGKIMSLAWWKRELFGGW. A helical membrane pass occupies residues 41–61; sequence THFEAVWLLMFLGIQAVVFVF. Residue Asn62 is a topological domain, periplasmic. Residues 63-83 traverse the membrane as a helical segment; it reads PDSWLASVAAVTGILCVVFVG. Topologically, residues 84-86 are cytoplasmic; it reads KGK. The chain crosses the membrane as a helical span at residues 87–107; it reads ISNYLFGLISVSLYAYVSYTF. The Periplasmic portion of the chain corresponds to 108-109; the sequence is KL. The helical transmembrane segment at 110 to 131 threads the bilayer; it reads YGEMMLNLLVYVPVQFVGFAMW. Residue Gln124 coordinates beta-nicotinamide D-riboside. Over 132–155 the chain is Cytoplasmic; sequence RKHMALGETAETEEVKAKALTVRQ. A helical membrane pass occupies residues 156-177; that stretch reads WLLVVAASVVGTSVYIEWLHHL. At 178 to 180 the chain is on the periplasmic side; the sequence is GSA. A helical membrane pass occupies residues 181–201; the sequence is LPTLDGVTVVVSIVAQVLMIL. Gln196 contacts beta-nicotinamide D-riboside. The Cytoplasmic segment spans residues 202-205; it reads RYRE. The chain crosses the membrane as a helical span at residues 206-226; it reads QWALWIVVNILTISLWAVAWF. The beta-nicotinamide D-riboside site is built by Trp210 and Asn214. Residues 227–232 are Periplasmic-facing; the sequence is KNGETS. The helical transmembrane segment at 233-253 threads the bilayer; the sequence is LPLLLMYVMYLCNSVYGYINW. Tyr242 serves as a coordination point for beta-nicotinamide D-riboside. Residues 254-263 lie on the Cytoplasmic side of the membrane; the sequence is TKLVKRHSGQ.

This sequence belongs to the nicotinamide ribonucleoside (NR) uptake permease (TC 4.B.1) family. In terms of assembly, homotrimer.

Its subcellular location is the cell inner membrane. Its function is as follows. Required for nicotinamide riboside transport across the inner membrane. This Neisseria mucosa (strain ATCC 25996 / DSM 4631 / NCTC 10774 / M26) protein is Nicotinamide riboside transporter PnuC.